A 260-amino-acid chain; its full sequence is Cell wall synthesis protein Wag31 (260 aa).

Residues 31-64 (FLDLVENELTRLIEENSDLRQRINELDQELAAGG) are a coiled coil. Thr73 carries the phosphothreonine modification. Positions 161 to 196 (MLADAQSRSEAQLRQAQEKADALQADAERKHSEIMG) form a coiled coil. Residues 233 to 260 (ELGQRGSAAPVDSNADAGGFDQFNRGKN) form a disordered region.

It belongs to the DivIVA family. Forms homooligomers. In terms of processing, phosphorylated by PknA. Phosphorylation enhances polar localization, which in turn heightens polar peptidoglycan biosynthesis.

The protein localises to the cytoplasm. Functionally, important for maintaining cell shape and cell wall integrity by localizing peptidoglycan synthesis to the cell poles. The polypeptide is Cell wall synthesis protein Wag31 (wag31) (Mycobacterium tuberculosis (strain CDC 1551 / Oshkosh)).